We begin with the raw amino-acid sequence, 24 residues long: Unknown protein 6 (24 aa).

The sequence is that of Unknown protein 6 from Lonomia obliqua (Moth).